The chain runs to 298 residues: tRNA dimethylallyltransferase 2 (298 aa).

10–17 serves as a coordination point for ATP; the sequence is GPTASGKT. 12–17 is a substrate binding site; sequence TASGKT. Residues 35-38 are interaction with substrate tRNA; it reads DSRQ.

Belongs to the IPP transferase family. Monomer. It depends on Mg(2+) as a cofactor.

The catalysed reaction is adenosine(37) in tRNA + dimethylallyl diphosphate = N(6)-dimethylallyladenosine(37) in tRNA + diphosphate. Functionally, catalyzes the transfer of a dimethylallyl group onto the adenine at position 37 in tRNAs that read codons beginning with uridine, leading to the formation of N6-(dimethylallyl)adenosine (i(6)A). The polypeptide is tRNA dimethylallyltransferase 2 (Syntrophotalea carbinolica (strain DSM 2380 / NBRC 103641 / GraBd1) (Pelobacter carbinolicus)).